The chain runs to 156 residues: MPRRRVVGQRKILPDPKFNSELLAKFINVIMQDGKKSTAEKIIYKALDTASEKKGEDHLVILEAALDNVRPSVEVKSRRVGGSTYQVPCEVRPVRRNALAMRWLVEAARKRGEKSMALRLAGEMLDASENKGTAVKKREDVHRMAEANKAFAHYRW.

Belongs to the universal ribosomal protein uS7 family. Part of the 30S ribosomal subunit. Contacts proteins S9 and S11.

Functionally, one of the primary rRNA binding proteins, it binds directly to 16S rRNA where it nucleates assembly of the head domain of the 30S subunit. Is located at the subunit interface close to the decoding center, probably blocks exit of the E-site tRNA. The polypeptide is Small ribosomal subunit protein uS7 (Shewanella piezotolerans (strain WP3 / JCM 13877)).